The sequence spans 256 residues: Thiazole synthase (256 aa).

Residue Lys-102 is the Schiff-base intermediate with DXP of the active site. 1-deoxy-D-xylulose 5-phosphate contacts are provided by residues Gly-163, 189–190, and 211–212; these read AG and AT.

The protein belongs to the ThiG family. As to quaternary structure, homotetramer. Forms heterodimers with either ThiH or ThiS.

It is found in the cytoplasm. The enzyme catalyses [ThiS sulfur-carrier protein]-C-terminal-Gly-aminoethanethioate + 2-iminoacetate + 1-deoxy-D-xylulose 5-phosphate = [ThiS sulfur-carrier protein]-C-terminal Gly-Gly + 2-[(2R,5Z)-2-carboxy-4-methylthiazol-5(2H)-ylidene]ethyl phosphate + 2 H2O + H(+). It functions in the pathway cofactor biosynthesis; thiamine diphosphate biosynthesis. Functionally, catalyzes the rearrangement of 1-deoxy-D-xylulose 5-phosphate (DXP) to produce the thiazole phosphate moiety of thiamine. Sulfur is provided by the thiocarboxylate moiety of the carrier protein ThiS. In vitro, sulfur can be provided by H(2)S. The polypeptide is Thiazole synthase (Nocardia farcinica (strain IFM 10152)).